The sequence spans 276 residues: Small ribosomal subunit protein uS5w (276 aa).

Residues 1 to 15 (MAERGVERGGDRGDF) show a composition bias toward basic and acidic residues. The tract at residues 1–42 (MAERGVERGGDRGDFGRGFGGRGGGRGGPRGRGRRAGRAPEE) is disordered. The segment covering 16-28 (GRGFGGRGGGRGG) has biased composition (gly residues). One can recognise an S5 DRBM domain in the interval 87-150 (LKDEVMKIMP…ILAKLSVVPI (64 aa)).

This sequence belongs to the universal ribosomal protein uS5 family.

The protein is Small ribosomal subunit protein uS5w (RPS2D) of Arabidopsis thaliana (Mouse-ear cress).